The primary structure comprises 1023 residues: Cell division cycle-associated protein 2 (1023 aa).

Residues 1 to 14 (MDANSKDKPPETKE) show a composition bias toward basic and acidic residues. The disordered stretch occupies residues 1–21 (MDANSKDKPPETKESAMNNAG). Phosphoserine is present on residues Ser-98, Ser-120, Ser-126, Ser-131, Ser-210, Ser-291, and Ser-309. The residue at position 312 (Thr-312) is a Phosphothreonine. The PP1-binding domain occupies 389–449 (KRKRVTFGED…PEPLPQPDFD (61 aa)). A phosphoserine mark is found at Ser-400 and Ser-407. Phosphothreonine is present on Thr-412. Position 437 is a phosphoserine (Ser-437). The tract at residues 542–580 (SQETKCTKRALPKKSQVLKSCRKKKGKGKKSVQKSLYGE) is disordered. The span at 561 to 573 (SCRKKKGKGKKSV) shows a compositional bias: basic residues. Phosphoserine is present on residues Ser-591 and Ser-614. Residues 667–729 (SSLGNATSDE…ERVASDSPKP (63 aa)) are disordered. The span at 679-691 (NTNIMNINENKNI) shows a compositional bias: low complexity. Residues 696-706 (NKSESENEPKA) are compositionally biased toward basic and acidic residues. Ser-710 and Ser-756 each carry phosphoserine. Residue Lys-762 forms a Glycyl lysine isopeptide (Lys-Gly) (interchain with G-Cter in SUMO2) linkage. Positions 803 to 816 (ESKSQSEDLGRKPM) are enriched in basic and acidic residues. Disordered stretches follow at residues 803 to 860 (ESKS…GSSV) and 936 to 1023 (SPIK…ERKQ). Ser-936 and Ser-977 each carry phosphoserine. Polar residues-rich tracts occupy residues 979-992 (CIST…TSQF) and 1000-1010 (SLNGKGESSLT). Ser-1000 is modified (phosphoserine). Over residues 1013–1023 (ERIEHNGERKQ) the composition is skewed to basic and acidic residues.

In terms of assembly, interacts with PPP1CC. Phosphorylated by CDK1. May regulate its subcellular location. As to expression, ubiquitously expressed.

Its subcellular location is the nucleus. Its function is as follows. Regulator of chromosome structure during mitosis required for condensin-depleted chromosomes to retain their compact architecture through anaphase. Acts by mediating the recruitment of phopsphatase PP1-gamma subunit (PPP1CC) to chromatin at anaphase and into the following interphase. At anaphase onset, its association with chromatin targets a pool of PPP1CC to dephosphorylate substrates. In Homo sapiens (Human), this protein is Cell division cycle-associated protein 2 (CDCA2).